The following is a 728-amino-acid chain: 1,4-alpha-glucan branching enzyme GlgB (728 aa).

Residue D405 is the Nucleophile of the active site. E458 functions as the Proton donor in the catalytic mechanism.

The protein belongs to the glycosyl hydrolase 13 family. GlgB subfamily. As to quaternary structure, monomer.

It catalyses the reaction Transfers a segment of a (1-&gt;4)-alpha-D-glucan chain to a primary hydroxy group in a similar glucan chain.. It functions in the pathway glycan biosynthesis; glycogen biosynthesis. Functionally, catalyzes the formation of the alpha-1,6-glucosidic linkages in glycogen by scission of a 1,4-alpha-linked oligosaccharide from growing alpha-1,4-glucan chains and the subsequent attachment of the oligosaccharide to the alpha-1,6 position. In Shigella flexneri serotype 5b (strain 8401), this protein is 1,4-alpha-glucan branching enzyme GlgB.